A 204-amino-acid polypeptide reads, in one-letter code: ATP-dependent Clp protease proteolytic subunit (204 aa).

Ser-102 serves as the catalytic Nucleophile. The active site involves His-127.

The protein belongs to the peptidase S14 family. As to quaternary structure, fourteen ClpP subunits assemble into 2 heptameric rings which stack back to back to give a disk-like structure with a central cavity, resembling the structure of eukaryotic proteasomes.

Its subcellular location is the cytoplasm. It catalyses the reaction Hydrolysis of proteins to small peptides in the presence of ATP and magnesium. alpha-casein is the usual test substrate. In the absence of ATP, only oligopeptides shorter than five residues are hydrolyzed (such as succinyl-Leu-Tyr-|-NHMec, and Leu-Tyr-Leu-|-Tyr-Trp, in which cleavage of the -Tyr-|-Leu- and -Tyr-|-Trp bonds also occurs).. Its function is as follows. Cleaves peptides in various proteins in a process that requires ATP hydrolysis. Has a chymotrypsin-like activity. Plays a major role in the degradation of misfolded proteins. In Neisseria meningitidis serogroup C (strain 053442), this protein is ATP-dependent Clp protease proteolytic subunit.